Consider the following 352-residue polypeptide: Photosystem II D2 protein (352 aa).

The helical transmembrane segment at Cys-40 to Thr-60 threads the bilayer. His-117 is a binding site for chlorophyll a. The helical transmembrane segment at Gly-124–Pro-140 threads the bilayer. Positions 129 and 142 each coordinate pheophytin a. The helical transmembrane segment at Val-152 to Ser-165 threads the bilayer. Chlorophyll a is bound at residue His-197. Residues Gly-207–Glu-227 form a helical membrane-spanning segment. A plastoquinone-binding residues include His-214 and Phe-261. A Fe cation-binding site is contributed by His-214. Position 268 (His-268) interacts with Fe cation. Residues Gly-278–Arg-294 form a helical membrane-spanning segment.

This sequence belongs to the reaction center PufL/M/PsbA/D family. PSII is composed of 1 copy each of membrane proteins PsbA, PsbB, PsbC, PsbD, PsbE, PsbF, PsbH, PsbI, PsbJ, PsbK, PsbL, PsbM, PsbT, PsbX, PsbY, PsbZ, Psb30/Ycf12, peripheral proteins PsbO, CyanoQ (PsbQ), PsbU, PsbV and a large number of cofactors. It forms dimeric complexes. The D1/D2 heterodimer binds P680, chlorophylls that are the primary electron donor of PSII, and subsequent electron acceptors. It shares a non-heme iron and each subunit binds pheophytin, quinone, additional chlorophylls, carotenoids and lipids. There is also a Cl(-1) ion associated with D1 and D2, which is required for oxygen evolution. The PSII complex binds additional chlorophylls, carotenoids and specific lipids. serves as cofactor.

It localises to the cellular thylakoid membrane. The enzyme catalyses 2 a plastoquinone + 4 hnu + 2 H2O = 2 a plastoquinol + O2. Photosystem II (PSII) is a light-driven water:plastoquinone oxidoreductase that uses light energy to abstract electrons from H(2)O, generating O(2) and a proton gradient subsequently used for ATP formation. It consists of a core antenna complex that captures photons, and an electron transfer chain that converts photonic excitation into a charge separation. The D1/D2 (PsbA/PsbD) reaction center heterodimer binds P680, the primary electron donor of PSII as well as several subsequent electron acceptors. D2 is needed for assembly of a stable PSII complex. The sequence is that of Photosystem II D2 protein from Synechococcus sp. (strain JA-2-3B'a(2-13)) (Cyanobacteria bacterium Yellowstone B-Prime).